The following is a 217-amino-acid chain: 3,4-dihydroxy-2-butanone 4-phosphate synthase (217 aa).

Residues arginine 37–glutamate 38, aspartate 42, arginine 150–threonine 154, and glutamate 174 each bind D-ribulose 5-phosphate. Position 38 (glutamate 38) interacts with Mg(2+). Histidine 153 is a Mg(2+) binding site.

Belongs to the DHBP synthase family. In terms of assembly, homodimer. Requires Mg(2+) as cofactor. It depends on Mn(2+) as a cofactor.

It carries out the reaction D-ribulose 5-phosphate = (2S)-2-hydroxy-3-oxobutyl phosphate + formate + H(+). The protein operates within cofactor biosynthesis; riboflavin biosynthesis; 2-hydroxy-3-oxobutyl phosphate from D-ribulose 5-phosphate: step 1/1. Functionally, catalyzes the conversion of D-ribulose 5-phosphate to formate and 3,4-dihydroxy-2-butanone 4-phosphate. The protein is 3,4-dihydroxy-2-butanone 4-phosphate synthase of Tolumonas auensis (strain DSM 9187 / NBRC 110442 / TA 4).